The primary structure comprises 725 residues: Fatty acid oxidation complex subunit alpha (725 aa).

The segment at 1–189 (MLYKGDTLYL…KIGLVDGVVK (189 aa)) is enoyl-CoA hydratase/isomerase. D296 lines the substrate pocket. Residues 311–725 (ETPKQAAVLG…RLNQPVRLVL (415 aa)) are 3-hydroxyacyl-CoA dehydrogenase. NAD(+) is bound by residues M324, D343, 400–402 (VVE), K407, and S429. H450 serves as the catalytic For 3-hydroxyacyl-CoA dehydrogenase activity. An NAD(+)-binding site is contributed by N453. N500 and Y660 together coordinate substrate.

In the N-terminal section; belongs to the enoyl-CoA hydratase/isomerase family. The protein in the C-terminal section; belongs to the 3-hydroxyacyl-CoA dehydrogenase family. Heterotetramer of two alpha chains (FadB) and two beta chains (FadA).

The catalysed reaction is a (3S)-3-hydroxyacyl-CoA + NAD(+) = a 3-oxoacyl-CoA + NADH + H(+). The enzyme catalyses a (3S)-3-hydroxyacyl-CoA = a (2E)-enoyl-CoA + H2O. It carries out the reaction a 4-saturated-(3S)-3-hydroxyacyl-CoA = a (3E)-enoyl-CoA + H2O. It catalyses the reaction (3S)-3-hydroxybutanoyl-CoA = (3R)-3-hydroxybutanoyl-CoA. The catalysed reaction is a (3Z)-enoyl-CoA = a 4-saturated (2E)-enoyl-CoA. The enzyme catalyses a (3E)-enoyl-CoA = a 4-saturated (2E)-enoyl-CoA. It functions in the pathway lipid metabolism; fatty acid beta-oxidation. In terms of biological role, involved in the aerobic and anaerobic degradation of long-chain fatty acids via beta-oxidation cycle. Catalyzes the formation of 3-oxoacyl-CoA from enoyl-CoA via L-3-hydroxyacyl-CoA. It can also use D-3-hydroxyacyl-CoA and cis-3-enoyl-CoA as substrate. The sequence is that of Fatty acid oxidation complex subunit alpha from Salmonella paratyphi A (strain ATCC 9150 / SARB42).